A 314-amino-acid chain; its full sequence is L-lactate dehydrogenase 2 (314 aa).

Residues Val16, Asp37, Lys42, Tyr68, and Gly82–Leu83 each bind NAD(+). Substrate is bound by residues Gln85, Arg91, and Asn123–Asp126. NAD(+)-binding positions include Ala121 to Asn123 and Ser146. Residue Asp151–Arg154 coordinates substrate. Beta-D-fructose 1,6-bisphosphate contacts are provided by Arg156 and His171. The active-site Proton acceptor is His178. Tyr223 is modified (phosphotyrosine). Thr232 lines the substrate pocket.

The protein belongs to the LDH/MDH superfamily. LDH family. In terms of assembly, homotetramer.

The protein localises to the cytoplasm. The catalysed reaction is (S)-lactate + NAD(+) = pyruvate + NADH + H(+). It participates in fermentation; pyruvate fermentation to lactate; (S)-lactate from pyruvate: step 1/1. Allosterically activated by fructose 1,6-bisphosphate (FBP). Its function is as follows. Catalyzes the conversion of lactate to pyruvate. The polypeptide is L-lactate dehydrogenase 2 (Bacillus cereus (strain ATCC 14579 / DSM 31 / CCUG 7414 / JCM 2152 / NBRC 15305 / NCIMB 9373 / NCTC 2599 / NRRL B-3711)).